Reading from the N-terminus, the 595-residue chain is UvrABC system protein C (595 aa).

The region spanning 14 to 91 (NNPGCYLHKD…IQENMPKFNI (78 aa)) is the GIY-YIG domain. Residues 196–231 (DKIVNQLKAKMKDMSDQMEFERAAEYRDLIEAVSTL) form the UVR domain.

The protein belongs to the UvrC family. As to quaternary structure, interacts with UvrB in an incision complex.

It is found in the cytoplasm. Its function is as follows. The UvrABC repair system catalyzes the recognition and processing of DNA lesions. UvrC both incises the 5' and 3' sides of the lesion. The N-terminal half is responsible for the 3' incision and the C-terminal half is responsible for the 5' incision. The sequence is that of UvrABC system protein C from Streptococcus thermophilus (strain ATCC BAA-250 / LMG 18311).